Here is a 205-residue protein sequence, read N- to C-terminus: Protein N-terminal glutamine amidohydrolase (205 aa).

Active-site residues include Cys-20, His-74, and Asp-90.

This sequence belongs to the NTAQ1 family. Monomer.

The enzyme catalyses N-terminal L-glutaminyl-[protein] + H2O = N-terminal L-glutamyl-[protein] + NH4(+). Its function is as follows. Mediates the side-chain deamidation of N-terminal glutamine residues to glutamate, an important step in N-end rule pathway of protein degradation. Conversion of the resulting N-terminal glutamine to glutamate renders the protein susceptible to arginylation, polyubiquitination and degradation as specified by the N-end rule. Does not act on substrates with internal or C-terminal glutamine and does not act on non-glutamine residues in any position. The protein is Protein N-terminal glutamine amidohydrolase (tun) of Drosophila pseudoobscura pseudoobscura (Fruit fly).